The primary structure comprises 214 residues: Transcriptional activator protein ExaE (214 aa).

Residues 2–118 form the Response regulatory domain; that stretch reads GILLVDDHPM…VVLEAVRRVL (117 aa). 4-aspartylphosphate is present on D53. The HTH luxR-type domain maps to 143–208; the sequence is GNARLQGLTQ…ELVHLAIEAG (66 aa). Residues 167-186 constitute a DNA-binding region (H-T-H motif); the sequence is TRLIAQQLCISAKTVSNYLT.

Positive regulator of the expression of the gene qedA and the activity of ADH I but does not affect the activities of ADH IIB or ADH IIG. This is Transcriptional activator protein ExaE from Pseudomonas putida (Arthrobacter siderocapsulatus).